Consider the following 293-residue polypeptide: Porphobilinogen deaminase (293 aa).

Cysteine 235 carries the S-(dipyrrolylmethanemethyl)cysteine modification.

The protein belongs to the HMBS family. Monomer. Dipyrromethane is required as a cofactor.

The enzyme catalyses 4 porphobilinogen + H2O = hydroxymethylbilane + 4 NH4(+). It participates in porphyrin-containing compound metabolism; protoporphyrin-IX biosynthesis; coproporphyrinogen-III from 5-aminolevulinate: step 2/4. Its function is as follows. Tetrapolymerization of the monopyrrole PBG into the hydroxymethylbilane pre-uroporphyrinogen in several discrete steps. This is Porphobilinogen deaminase from Ruminiclostridium cellulolyticum (strain ATCC 35319 / DSM 5812 / JCM 6584 / H10) (Clostridium cellulolyticum).